A 1311-amino-acid polypeptide reads, in one-letter code: Zinc finger protein 521 (1311 aa).

Basic residues predominate over residues Met-1–Arg-10. The segment at Met-1 to Asp-37 is disordered. Residues Ser-11–Asp-21 are compositionally biased toward basic and acidic residues. A C2H2-type 1; degenerate zinc finger spans residues His-47–Ile-67. The disordered stretch occupies residues Asp-81–Gly-108. Over residues Pro-87–Gly-102 the composition is skewed to low complexity. 7 consecutive C2H2-type zinc fingers follow at residues Tyr-118 to His-140, Phe-146 to His-168, Tyr-174 to His-196, Tyr-202 to His-224, Gln-246 to His-269, Leu-281 to His-304, and Asn-310 to His-332. Low complexity predominate over residues Val-349–Thr-358. The interval Val-349–Ser-397 is disordered. 2 stretches are compositionally biased toward polar residues: residues Pro-359–Met-370 and Ala-387–Ser-397. The segment at Tyr-405–His-429 adopts a C2H2-type 9; degenerate zinc-finger fold. 3 C2H2-type zinc fingers span residues His-437–His-460, Tyr-477–His-500, and Phe-513–His-536. Ser-546 carries the post-translational modification Phosphoserine. The segment at Tyr-560–His-585 adopts a C2H2-type 13; atypical zinc-finger fold. 2 positions are modified to phosphoserine: Ser-605 and Ser-608. C2H2-type zinc fingers lie at residues Tyr-634–His-656, Leu-664–His-686, Tyr-694–His-717, Phe-722–His-745, Tyr-752–His-775, His-783–His-805, and Tyr-809–His-832. Positions Thr-863 to Ser-882 are disordered. The segment at Tyr-886–Asp-908 adopts a C2H2-type 21; degenerate zinc-finger fold. C2H2-type zinc fingers lie at residues Tyr-930–His-952, Tyr-959–His-981, and Phe-1020–His-1042. The C2H2-type 25; degenerate zinc finger occupies Tyr-1065–Leu-1083. The C2H2-type 26 zinc finger occupies Thr-1138–His-1161. A Glycyl lysine isopeptide (Lys-Gly) (interchain with G-Cter in SUMO2) cross-link involves residue Lys-1146. Residues Ser-1168–Val-1178 show a composition bias toward polar residues. The tract at residues Ser-1168–Gln-1188 is disordered. 4 C2H2-type zinc fingers span residues Tyr-1195–His-1217, His-1225–His-1247, Phe-1256–His-1279, and Tyr-1286–His-1309.

Belongs to the krueppel C2H2-type zinc-finger protein family. In terms of assembly, interacts with EBF1. Interacts with SMAD1 and SMAD4. In terms of tissue distribution, predominantly expressed in hematopoietic cells. Present in organs and tissues that contain stem and progenitor cells, myeloid and/or lymphoid: placenta, spleen, lymph nodes, thymus, bone marrow and fetal liver. Within the hematopoietic system, it is abundant in CD34(+) cells but undetectable in mature peripheral blood leukocytes, and its levels rapidly decrease during the differentiation of CD34(+) cells in response to hemopoietins.

The protein localises to the nucleus. Functionally, transcription factor that can both act as an activator or a repressor depending on the context. Involved in BMP signaling and in the regulation of the immature compartment of the hematopoietic system. Associates with SMADs in response to BMP2 leading to activate transcription of BMP target genes. Acts as a transcriptional repressor via its interaction with EBF1, a transcription factor involved specification of B-cell lineage; this interaction preventing EBF1 to bind DNA and activate target genes. In Homo sapiens (Human), this protein is Zinc finger protein 521 (ZNF521).